Reading from the N-terminus, the 146-residue chain is Large ribosomal subunit protein bL21 (146 aa).

Over residues 95 to 104 the composition is skewed to basic residues; the sequence is PKKKTRRKMG. The tract at residues 95–146 is disordered; the sequence is PKKKTRRKMGHRQELTRVMVKSISISKSTPKSSPKTEATKKSTSSKASKPEN. Residues 115 to 146 are compositionally biased toward low complexity; the sequence is KSISISKSTPKSSPKTEATKKSTSSKASKPEN.

It belongs to the bacterial ribosomal protein bL21 family. In terms of assembly, part of the 50S ribosomal subunit. Contacts protein L20.

Its function is as follows. This protein binds to 23S rRNA in the presence of protein L20. The polypeptide is Large ribosomal subunit protein bL21 (Prochlorococcus marinus (strain MIT 9515)).